The chain runs to 487 residues: 3-octaprenyl-4-hydroxybenzoate carboxy-lyase (487 aa).

Position 172 (Asn172) interacts with Mn(2+). Residues 175-177 (IYR), 189-191 (RWL), and 194-195 (RG) each bind prenylated FMN. Glu238 is a Mn(2+) binding site. Asp287 functions as the Proton donor in the catalytic mechanism.

Belongs to the UbiD family. In terms of assembly, homohexamer. Prenylated FMN is required as a cofactor. It depends on Mn(2+) as a cofactor.

Its subcellular location is the cell membrane. It catalyses the reaction a 4-hydroxy-3-(all-trans-polyprenyl)benzoate + H(+) = a 2-(all-trans-polyprenyl)phenol + CO2. It functions in the pathway cofactor biosynthesis; ubiquinone biosynthesis. Its function is as follows. Catalyzes the decarboxylation of 3-octaprenyl-4-hydroxy benzoate to 2-octaprenylphenol, an intermediate step in ubiquinone biosynthesis. The polypeptide is 3-octaprenyl-4-hydroxybenzoate carboxy-lyase (Nitrosospira multiformis (strain ATCC 25196 / NCIMB 11849 / C 71)).